Reading from the N-terminus, the 333-residue chain is Prenyltransferase stbC (333 aa).

8 helical membrane passes run 74-94 (VAFQ…AGCA), 125-145 (ANIF…PLPA), 147-164 (CQRL…YPFC), 173-193 (VILG…AGLP), 201-221 (VPTI…DVVY), 247-267 (ILLT…GVLV), 272-292 (YFFV…IGGI), and 304-324 (SGWF…IEYL).

This sequence belongs to the UbiA prenyltransferase family.

It localises to the membrane. The enzyme catalyses orsellinate + (2E,6E)-farnesyl diphosphate = ilicicolinate B + diphosphate. The protein operates within secondary metabolite biosynthesis; terpenoid biosynthesis. In terms of biological role, prenyltransferase; part of the cluster that mediates the biosynthesis of LL-Z1272-beta, also known as ilicicolin B, a prenylated aryl-aldehyde produced by several fungi and that serves as a key pathway intermediate for many fungal meroterpenoids. The first step in the pathway is performed by the non-reducing polyketide synthase stbA that produces orsellinic acid by condensing acetyl-CoA with 3 malonyl-CoA units. The prenyltransferase stbC then prenylates orsenilic acid into grifolic acid. Finally, grifolic acid is reduced to ilicicolin B by the NRPS-like protein stbB. This is Prenyltransferase stbC from Stachybotrys bisbyi (Hyalostachybotrys bisbyi).